The primary structure comprises 301 residues: N-carbamoylputrescine amidase (301 aa).

The region spanning 11–269 (VSVAAVQFAC…EDVLVAEFDL (259 aa)) is the CN hydrolase domain. Catalysis depends on Glu50, which acts as the Proton acceptor. Lys123 (proton donor) is an active-site residue. Residue Cys160 is the Nucleophile of the active site.

The protein belongs to the carbon-nitrogen hydrolase superfamily. Homooctamer.

It carries out the reaction N-carbamoylputrescine + H2O + 2 H(+) = putrescine + NH4(+) + CO2. It functions in the pathway amine and polyamine biosynthesis; putrescine biosynthesis via agmatine pathway; putrescine from N-carbamoylputrescine (amidase route): step 1/1. Its function is as follows. Involved in polyamine biosynthesis. The chain is N-carbamoylputrescine amidase (CPA) from Oryza sativa subsp. japonica (Rice).